We begin with the raw amino-acid sequence, 514 residues long: LWamide neuropeptides (514 aa).

An N-terminal signal peptide occupies residues 1–22 (MALKCHLVLLAITLLLAQCSGS). Over residues 23–53 (VDKKDSTTNHLDEKKTDSTEAHIVQETDALK) the composition is skewed to basic and acidic residues. The propeptide occupies 23–75 (VDKKDSTTNHLDEKKTDSTEAHIVQETDALKENSYLGAEEESKEEDKKRSAAP). The tract at residues 23-180 (VDKKDSTTNH…PGLWGRSADA (158 aa)) is disordered. Tryptophan 81 and tryptophan 90 each carry tryptophan amide. A propeptide spanning residues 93-97 (SADAG) is cleaved from the precursor. Tryptophan 102 and tryptophan 111 each carry tryptophan amide. The propeptide occupies 114 to 118 (SADAG). 2 positions are modified to tryptophan amide: tryptophan 123 and tryptophan 132. A propeptide spanning residues 135–139 (SADAG) is cleaved from the precursor. A tryptophan amide mark is found at tryptophan 144 and tryptophan 153. A propeptide spanning residues 156–160 (SADAG) is cleaved from the precursor. 2 positions are modified to tryptophan amide: tryptophan 165 and tryptophan 174. Residues 177 to 181 (SADAR) constitute a propeptide that is removed on maturation. Tryptophan 186 carries the tryptophan amide modification. A propeptide spanning residues 190-199 (EIYALWGGKR) is cleaved from the precursor. Position 205 is a tryptophan amide (tryptophan 205). Residues 208–212 (SADPG) constitute a propeptide that is removed on maturation. The residue at position 217 (tryptophan 217) is a Tryptophan amide. Positions 221-230 (ELVGLWGGKR) are excised as a propeptide. Tryptophan 236 carries the tryptophan amide modification. Residues 239 to 243 (SAEAG) constitute a propeptide that is removed on maturation. Tryptophan amide is present on residues tryptophan 248 and tryptophan 257. The tract at residues 258–475 (GRSADPLQPG…GRSAGSGQLG (218 aa)) is disordered. The propeptide occupies 260 to 264 (SADPL). 2 positions are modified to tryptophan amide: tryptophan 269 and tryptophan 278. The propeptide occupies 281-284 (SADP). A tryptophan amide mark is found at tryptophan 290 and tryptophan 299. Residues 302–305 (SADP) constitute a propeptide that is removed on maturation. Tryptophan amide is present on residues tryptophan 311 and tryptophan 320. A propeptide spanning residues 323 to 326 (SADP) is cleaved from the precursor. Tryptophan amide is present on residues tryptophan 332 and tryptophan 341. A propeptide spanning residues 344–347 (SADP) is cleaved from the precursor. Tryptophan 353 is modified (tryptophan amide). Residues 356 to 366 (SPGLWGRSADP) constitute a propeptide that is removed on maturation. Tryptophan amide is present on tryptophan 372. A propeptide spanning residues 376 to 387 (QNPGFWGRSADP) is cleaved from the precursor. A tryptophan amide mark is found at tryptophan 393 and tryptophan 402. A propeptide spanning residues 405 to 408 (SADP) is cleaved from the precursor. A tryptophan amide mark is found at tryptophan 414 and tryptophan 423. The propeptide occupies 426–429 (SADP). Tryptophan amide occurs at positions 435 and 444. Residues 447 to 450 (SADP) constitute a propeptide that is removed on maturation. Tryptophan 456 and tryptophan 465 each carry tryptophan amide. A propeptide spanning residues 468-472 (SAGSG) is cleaved from the precursor. 2 positions are modified to tryptophan amide: tryptophan 477 and tryptophan 487. Residues 489 to 514 (RSAEPPQFEDLEDLKKKSAIPQPKGQ) are disordered. A propeptide spanning residues 490 to 514 (SAEPPQFEDLEDLKKKSAIPQPKGQ) is cleaved from the precursor.

This sequence belongs to the LWamide neuropeptide family.

The protein resides in the secreted. Its function is as follows. Metamorphosin A may be part of an internal signaling system involved in control of metamorphosis. The polypeptide is LWamide neuropeptides (Anthopleura elegantissima (Green aggregating anemone)).